A 613-amino-acid polypeptide reads, in one-letter code: Alkyldihydroxyacetonephosphate synthase (613 aa).

In terms of domain architecture, FAD-binding PCMH-type spans 126 to 307 (IDRPPDAVIL…TEAVVKIERL (182 aa)). Residues 158–164 (PFGGGTN), 228–234 (DSYAYST), 241–244 (ARGS), and 291–297 (EGAFGLV) each bind FAD. Residue Arg-437 coordinates substrate. Tyr-498 serves as the catalytic Proton donor/acceptor. The tract at residues 534-536 (HHH) is important for enzyme activity. The segment at 572–593 (NPGKLLPSPPSEKETPKATQAR) is disordered. The Microbody targeting signal motif lies at 611-613 (AHL).

The protein belongs to the FAD-binding oxidoreductase/transferase type 4 family. Homodimer. FAD is required as a cofactor.

The protein resides in the peroxisome. It carries out the reaction a long chain fatty alcohol + a 1-acylglycerone 3-phosphate = a 1-O-alkylglycerone 3-phosphate + a long-chain fatty acid + H(+). It functions in the pathway glycerolipid metabolism; ether lipid biosynthesis. Its function is as follows. Catalyzes the exchange of an acyl for a long-chain alkyl group and the formation of the ether bond in the biosynthesis of ether phospholipids. This chain is Alkyldihydroxyacetonephosphate synthase, found in Trypanosoma brucei brucei.